A 260-amino-acid polypeptide reads, in one-letter code: CD40 ligand (260 aa).

The Cytoplasmic segment spans residues 1–22; it reads MIETYSQTAPRSVAPGPPVSMK. A helical; Signal-anchor for type II membrane protein transmembrane segment spans residues 23-46; it reads IFMYLLTVFLITQMIGSALFAVYL. Residues 47–260 are Extracellular-facing; that stretch reads HRRLDKIEDE…GFTSFGLLKL (214 aa). The region spanning 121 to 260 is the THD domain; sequence VAAHVISEAS…GFTSFGLLKL (140 aa). Cys177 and Cys217 form a disulfide bridge. N-linked (GlcNAc...) asparagine glycosylation occurs at Asn239.

This sequence belongs to the tumor necrosis factor family. As to quaternary structure, homotrimer. Interacts with CD28. CD40 ligand, soluble form: Exists as either a monomer or a homotrimer. Forms a ternary complex between CD40 and integrins for CD40-CD40LG signaling. The soluble form derives from the membrane form by proteolytic processing.

It localises to the cell membrane. The protein localises to the cell surface. It is found in the secreted. Cytokine that acts as a ligand to CD40/TNFRSF5. Costimulates T-cell proliferation and cytokine production. Its cross-linking on T-cells generates a costimulatory signal which enhances the production of IL4 and IL10 in conjunction with the TCR/CD3 ligation and CD28 costimulation. Induces the activation of NF-kappa-B. Induces the activation of kinases MAPK8 and PAK2 in T-cells. Mediates B-cell proliferation in the absence of co-stimulus as well as IgE production in the presence of IL4. Involved in immunoglobulin class switching. Its function is as follows. Acts as a ligand for integrins, specifically ITGA5:ITGB1 and ITGAV:ITGB3; both integrins and the CD40 receptor are required for activation of CD40-CD40LG signaling, which have cell-type dependent effects, such as B-cell activation, NF-kappa-B signaling and anti-apoptotic signaling. The polypeptide is CD40 ligand (CD40LG) (Felis catus (Cat)).